The primary structure comprises 424 residues: Tyrosine--tRNA ligase (424 aa).

Tyr-37 lines the L-tyrosine pocket. The short motif at 42–51 is the 'HIGH' region element; sequence PTADSLHLGH. 2 residues coordinate L-tyrosine: Tyr-175 and Gln-179. The 'KMSKS' region motif lies at 235 to 239; the sequence is KFGKT. Residue Lys-238 coordinates ATP. Positions 357 to 414 constitute an S4 RNA-binding domain; it reads ADLMQALVDAELQPSRGQARKTIASNAVTINGEKQSDPEYIFNDEDRLFGRYTLLRRG.

This sequence belongs to the class-I aminoacyl-tRNA synthetase family. TyrS type 1 subfamily. As to quaternary structure, homodimer.

It localises to the cytoplasm. The catalysed reaction is tRNA(Tyr) + L-tyrosine + ATP = L-tyrosyl-tRNA(Tyr) + AMP + diphosphate + H(+). Functionally, catalyzes the attachment of tyrosine to tRNA(Tyr) in a two-step reaction: tyrosine is first activated by ATP to form Tyr-AMP and then transferred to the acceptor end of tRNA(Tyr). The sequence is that of Tyrosine--tRNA ligase from Salmonella enteritidis PT4 (strain P125109).